An 81-amino-acid polypeptide reads, in one-letter code: Centromere protein X (81 aa).

Residue M1 is modified to N-acetylmethionine.

The protein belongs to the CENP-X/MHF2 family. Heterodimer with CENPX, sometimes called MHF; this interaction stabilizes both partners. MHF heterodimers can assemble to form tetrameric structures. MHF also coassemble with CENPT-CENPW heterodimers at centromeres to form the tetrameric CENP-T-W-S-X complex. Forms a discrete complex with FANCM and CENPX, called FANCM-MHF; this interaction, probably mediated by direct binding between CENPS and FANCM, leads to synergistic activation of double-stranded DNA binding and strongly stimulates FANCM-mediated DNA remodeling. Recruited by FANCM to the Fanconi anemia (FA) core complex, which consists of CENPS, CENPX, FANCA, FANCB, FANCC, FANCE, FANCF, FANCG, FANCL, FANCM, FAAP24 and FAAP100. The FA core complex associates with Bloom syndrome (BLM) complex, which consists of at least BLM, DNA topoisomerase 3-alpha (TOP3A), RMI1/BLAP75, RPA1/RPA70 and RPA2/RPA32. The super complex between FA and BLM is called BRAFT.

It localises to the nucleus. Its subcellular location is the chromosome. The protein localises to the centromere. The protein resides in the kinetochore. Its function is as follows. DNA-binding component of the Fanconi anemia (FA) core complex. Required for the normal activation of the FA pathway, leading to monoubiquitination of the FANCI-FANCD2 complex in response to DNA damage, cellular resistance to DNA cross-linking drugs, and prevention of chromosomal breakage. In complex with CENPS (MHF heterodimer), crucial cofactor for FANCM in both binding and ATP-dependent remodeling of DNA. Stabilizes FANCM. In complex with CENPS and FANCM (but not other FANC proteins), rapidly recruited to blocked forks and promotes gene conversion at blocked replication forks. In complex with CENPS, CENPT and CENPW (CENP-T-W-S-X heterotetramer), involved in the formation of a functional kinetochore outer plate, which is essential for kinetochore-microtubule attachment and faithful mitotic progression. As a component of MHF and CENP-T-W-S-X complexes, binds DNA and bends it to form a nucleosome-like structure. DNA-binding function is fulfilled in the presence of CENPS, with the following preference for DNA substates: Holliday junction &gt; double-stranded &gt; splay arm &gt; single-stranded. Does not bind DNA on its own. This chain is Centromere protein X (CENPX), found in Pongo abelii (Sumatran orangutan).